A 438-amino-acid polypeptide reads, in one-letter code: Adenosylhomocysteinase (438 aa).

Substrate contacts are provided by threonine 61, aspartate 137, and glutamate 162. 163–165 (TTT) serves as a coordination point for NAD(+). Substrate is bound by residues lysine 192 and aspartate 196. NAD(+)-binding positions include asparagine 197, 226 to 231 (GYGDVG), glutamate 249, asparagine 284, 305 to 307 (IGH), and asparagine 352.

It belongs to the adenosylhomocysteinase family. NAD(+) is required as a cofactor.

The protein localises to the cytoplasm. It carries out the reaction S-adenosyl-L-homocysteine + H2O = L-homocysteine + adenosine. The protein operates within amino-acid biosynthesis; L-homocysteine biosynthesis; L-homocysteine from S-adenosyl-L-homocysteine: step 1/1. May play a key role in the regulation of the intracellular concentration of adenosylhomocysteine. The protein is Adenosylhomocysteinase of Flavobacterium johnsoniae (strain ATCC 17061 / DSM 2064 / JCM 8514 / BCRC 14874 / CCUG 350202 / NBRC 14942 / NCIMB 11054 / UW101) (Cytophaga johnsonae).